The sequence spans 199 residues: Putative peroxiredoxin ycf42 (199 aa).

The 158-residue stretch at 8-165 (LRVGQLAPDF…TLRVLQAIQY (158 aa)) folds into the Thioredoxin domain. C53 serves as the catalytic Cysteine sulfenic acid (-SOH) intermediate.

Belongs to the peroxiredoxin family. AhpC/Prx1 subfamily. As to quaternary structure, homodimer; disulfide-linked, upon oxidation. Post-translationally, the Cys-53-SH group is the primary site of oxidation by H(2)O(2), and the oxidized Cys-53 (probably Cys-SOH) rapidly reacts with Cys-174-SH of the other subunit to form an intermolecular disulfide. This disulfide is subsequently reduced by thioredoxin.

It is found in the plastid. The protein resides in the chloroplast. It catalyses the reaction a hydroperoxide + [thioredoxin]-dithiol = an alcohol + [thioredoxin]-disulfide + H2O. Thiol-specific peroxidase that catalyzes the reduction of hydrogen peroxide and organic hydroperoxides to water and alcohols, respectively. Plays a role in cell protection against oxidative stress by detoxifying peroxides. This chain is Putative peroxiredoxin ycf42 (ycf42), found in Pyropia yezoensis (Susabi-nori).